The chain runs to 247 residues: Chaperone protein AfaB (247 aa).

An N-terminal signal peptide occupies residues 1–29 (MKMRAVAVFTGMLTGVLSVAGLLSAGAYA).

The protein belongs to the periplasmic pilus chaperone family.

The protein localises to the periplasm. Its function is as follows. Involved in the biogenesis of the AFA-III afimbrial adhesin. The protein is Chaperone protein AfaB (afaB) of Escherichia coli.